The primary structure comprises 478 residues: WD repeat-containing protein AAC3 (478 aa).

Disordered regions lie at residues His-33–Gln-53 and Ser-106–Asn-140. The span at Ser-106–Ser-125 shows a compositional bias: low complexity. Over residues Lys-126–Asn-140 the composition is skewed to polar residues. WD repeat units follow at residues Gly-163–Asn-202, Gly-226–Ser-268, Asn-270–Ile-307, Phe-310–Val-349, Gly-357–Thr-396, Lys-399–Thr-438, and Glu-440–Ser-478.

Belongs to the THOC3 family.

This chain is WD repeat-containing protein AAC3 (AAC3), found in Dictyostelium discoideum (Social amoeba).